We begin with the raw amino-acid sequence, 230 residues long: 5'-methylthioadenosine/S-adenosylhomocysteine nucleosidase (230 aa).

Glu-12 (proton acceptor) is an active-site residue. Substrate is bound by residues Gly-78, Ile-153, and 174 to 175 (ME). The active-site Proton donor is the Asp-198.

It belongs to the PNP/UDP phosphorylase family. MtnN subfamily.

It catalyses the reaction S-adenosyl-L-homocysteine + H2O = S-(5-deoxy-D-ribos-5-yl)-L-homocysteine + adenine. It carries out the reaction S-methyl-5'-thioadenosine + H2O = 5-(methylsulfanyl)-D-ribose + adenine. The enzyme catalyses 5'-deoxyadenosine + H2O = 5-deoxy-D-ribose + adenine. It functions in the pathway amino-acid biosynthesis; L-methionine biosynthesis via salvage pathway; S-methyl-5-thio-alpha-D-ribose 1-phosphate from S-methyl-5'-thioadenosine (hydrolase route): step 1/2. Its function is as follows. Catalyzes the irreversible cleavage of the glycosidic bond in both 5'-methylthioadenosine (MTA) and S-adenosylhomocysteine (SAH/AdoHcy) to adenine and the corresponding thioribose, 5'-methylthioribose and S-ribosylhomocysteine, respectively. Also cleaves 5'-deoxyadenosine, a toxic by-product of radical S-adenosylmethionine (SAM) enzymes, into 5-deoxyribose and adenine. The polypeptide is 5'-methylthioadenosine/S-adenosylhomocysteine nucleosidase (Shewanella halifaxensis (strain HAW-EB4)).